Consider the following 724-residue polypeptide: Phenylalanine ammonia-lyase (724 aa).

Tyr91 functions as the Proton donor/acceptor in the catalytic mechanism. Residues 205-207 constitute a cross-link (5-imidazolinone (Ala-Gly)); sequence ASG. The residue at position 206 (Ser206) is a 2,3-didehydroalanine (Ser). Asn265, Gln357, Arg363, Asn393, Lys467, Glu495, and Asn498 together coordinate (E)-cinnamate.

The protein belongs to the PAL/histidase family. In terms of assembly, homotetramer. Post-translationally, contains an active site 4-methylidene-imidazol-5-one (MIO), which is formed autocatalytically by cyclization and dehydration of residues Ala-Ser-Gly.

Its subcellular location is the cytoplasm. It carries out the reaction L-phenylalanine = (E)-cinnamate + NH4(+). Its pathway is phenylpropanoid metabolism; trans-cinnamate biosynthesis; trans-cinnamate from L-phenylalanine: step 1/1. Catalyzes the non-oxidative deamination of L-phenylalanine to form trans-cinnamic acid and a free ammonium ion. Facilitates the commitment step in phenylpropanoid pathways that produce secondary metabolites such as lignins, coumarins and flavonoids. The chain is Phenylalanine ammonia-lyase (PAL1) from Mycosarcoma maydis (Corn smut fungus).